We begin with the raw amino-acid sequence, 1391 residues long: DNA-directed RNA polymerase subunit beta' (1391 aa).

4 residues coordinate Zn(2+): cysteine 72, cysteine 74, cysteine 87, and cysteine 90. 3 residues coordinate Mg(2+): aspartate 462, aspartate 464, and aspartate 466. The Zn(2+) site is built by cysteine 816, cysteine 890, cysteine 897, and cysteine 900.

It belongs to the RNA polymerase beta' chain family. In terms of assembly, the RNAP catalytic core consists of 2 alpha, 1 beta, 1 beta' and 1 omega subunit. When a sigma factor is associated with the core the holoenzyme is formed, which can initiate transcription. It depends on Mg(2+) as a cofactor. Zn(2+) is required as a cofactor.

It catalyses the reaction RNA(n) + a ribonucleoside 5'-triphosphate = RNA(n+1) + diphosphate. In terms of biological role, DNA-dependent RNA polymerase catalyzes the transcription of DNA into RNA using the four ribonucleoside triphosphates as substrates. This Neisseria gonorrhoeae (strain ATCC 700825 / FA 1090) protein is DNA-directed RNA polymerase subunit beta'.